The following is a 356-amino-acid chain: MGANVLIMAGGTGGHVFPALACAREFQNRGYTVHWLGTPRGIENELVPNAGLPLHLINVTGLRGKGKLSLLKAPFVLLKAVWQARKVIRDVQPVCVLGFGGYVTGPGGVAAKLAGVPVIVHEQNAVAGTANRLLVPLAARVCEAFPNTFSASDKRRTTGNPVRTELFMDIARQALAGRKAHLLILGGSLGAEPLNKLLPEAVAQLPAELRPEIFHQAGKNHDEVTATRYREAGVEANVQPFIKDMAHAYGWADLVVCRAGALTVSELAAAGLPSLLVPLPHAIDDHQTRNAEYLAGEGAAFLLPQRTTGAADLAARLTEVLMQPERLNSMASTASRLAKPDATRTVVDICLEVAHG.

UDP-N-acetyl-alpha-D-glucosamine-binding positions include 12 to 14, asparagine 124, arginine 163, serine 188, isoleucine 242, 261 to 266, and glutamine 287; these read TGG and ALTVSE.

Belongs to the glycosyltransferase 28 family. MurG subfamily.

The protein localises to the cell inner membrane. It catalyses the reaction di-trans,octa-cis-undecaprenyl diphospho-N-acetyl-alpha-D-muramoyl-L-alanyl-D-glutamyl-meso-2,6-diaminopimeloyl-D-alanyl-D-alanine + UDP-N-acetyl-alpha-D-glucosamine = di-trans,octa-cis-undecaprenyl diphospho-[N-acetyl-alpha-D-glucosaminyl-(1-&gt;4)]-N-acetyl-alpha-D-muramoyl-L-alanyl-D-glutamyl-meso-2,6-diaminopimeloyl-D-alanyl-D-alanine + UDP + H(+). Its pathway is cell wall biogenesis; peptidoglycan biosynthesis. Cell wall formation. Catalyzes the transfer of a GlcNAc subunit on undecaprenyl-pyrophosphoryl-MurNAc-pentapeptide (lipid intermediate I) to form undecaprenyl-pyrophosphoryl-MurNAc-(pentapeptide)GlcNAc (lipid intermediate II). The sequence is that of UDP-N-acetylglucosamine--N-acetylmuramyl-(pentapeptide) pyrophosphoryl-undecaprenol N-acetylglucosamine transferase from Pseudomonas fluorescens (strain SBW25).